We begin with the raw amino-acid sequence, 129 residues long: Phosphoribosyl-AMP cyclohydrolase (129 aa).

Mg(2+) is bound at residue Asp77. A Zn(2+)-binding site is contributed by Cys78. Residues Asp79 and Asp81 each coordinate Mg(2+). Zn(2+) contacts are provided by Cys94 and Cys101.

This sequence belongs to the PRA-CH family. As to quaternary structure, homodimer. Mg(2+) serves as cofactor. The cofactor is Zn(2+).

It localises to the cytoplasm. It carries out the reaction 1-(5-phospho-beta-D-ribosyl)-5'-AMP + H2O = 1-(5-phospho-beta-D-ribosyl)-5-[(5-phospho-beta-D-ribosylamino)methylideneamino]imidazole-4-carboxamide. It functions in the pathway amino-acid biosynthesis; L-histidine biosynthesis; L-histidine from 5-phospho-alpha-D-ribose 1-diphosphate: step 3/9. Functionally, catalyzes the hydrolysis of the adenine ring of phosphoribosyl-AMP. This chain is Phosphoribosyl-AMP cyclohydrolase, found in Pelotomaculum thermopropionicum (strain DSM 13744 / JCM 10971 / SI).